The following is a 125-amino-acid chain: Small ribosomal subunit protein uS12m (125 aa).

2 disordered regions span residues 1–23 and 104–125; these read MPTL…RTRA and LMGI…PKSI. Basic and acidic residues predominate over residues 10 to 23; the sequence is HGREEKRRTDRTRA.

It belongs to the universal ribosomal protein uS12 family.

Its subcellular location is the mitochondrion. Its function is as follows. Protein S12 is involved in the translation initiation step. This is Small ribosomal subunit protein uS12m (RPS12) from Raphanus sativus (Radish).